The following is an 827-amino-acid chain: 6-phosphofructo-2-kinase 1 (827 aa).

2 disordered regions span residues 1–97 (MFKP…ENSA) and 149–175 (TRHH…DGLI). Residues 31–41 (SQDSSYDLLSR) show a composition bias toward low complexity. Residues 42–59 (SSDDKIDAEKGPHDELSK) are compositionally biased toward basic and acidic residues. Residues 72–97 (TPISSNWNSPGITEENTPSDSPENSA) show a composition bias toward polar residues. Residue Ser-92 is modified to Phosphoserine. A Phosphothreonine modification is found at Thr-157. Position 190–197 (190–197 (GLPATGKS)) interacts with ATP. Catalysis depends on residues Asp-277 and Cys-309. Residue Arg-343 participates in beta-D-fructose 6-phosphate binding. The active-site Phosphoserine intermediate is the Ser-404. The active site involves Glu-497. Residue His-565 is the Proton donor of the active site. A phosphoserine mark is found at Ser-644, Ser-652, Ser-659, and Ser-667. Disordered stretches follow at residues 649-704 (APPS…SNFN) and 799-827 (HGKD…QSHV). Over residues 671 to 682 (SASSSQSELSEQ) the composition is skewed to low complexity. Residues 683 to 704 (PKNSVSAQTGSNNTTLIGSNFN) show a composition bias toward polar residues.

The catalysed reaction is beta-D-fructose 6-phosphate + ATP = beta-D-fructose 2,6-bisphosphate + ADP + H(+). Phosphorylation results in the activation of the kinase activity. Its function is as follows. Synthesis of fructose 2,6-bisphosphate. The sequence is that of 6-phosphofructo-2-kinase 1 (PFK26) from Saccharomyces cerevisiae (strain ATCC 204508 / S288c) (Baker's yeast).